Here is a 336-residue protein sequence, read N- to C-terminus: tRNA N6-adenosine threonylcarbamoyltransferase (336 aa).

The Fe cation site is built by His114 and His118. Substrate is bound by residues 136 to 140 (LVSGG), Asp169, Gly182, Asp186, and Asn275. Fe cation is bound at residue Asp302.

It belongs to the KAE1 / TsaD family. Fe(2+) is required as a cofactor.

Its subcellular location is the cytoplasm. The enzyme catalyses L-threonylcarbamoyladenylate + adenosine(37) in tRNA = N(6)-L-threonylcarbamoyladenosine(37) in tRNA + AMP + H(+). Its function is as follows. Required for the formation of a threonylcarbamoyl group on adenosine at position 37 (t(6)A37) in tRNAs that read codons beginning with adenine. Is involved in the transfer of the threonylcarbamoyl moiety of threonylcarbamoyl-AMP (TC-AMP) to the N6 group of A37, together with TsaE and TsaB. TsaD likely plays a direct catalytic role in this reaction. The chain is tRNA N6-adenosine threonylcarbamoyltransferase from Streptococcus agalactiae serotype Ia (strain ATCC 27591 / A909 / CDC SS700).